We begin with the raw amino-acid sequence, 371 residues long: tRNA-specific 2-thiouridylase MnmA (371 aa).

ATP is bound by residues 13-20 (GMSGGVDS) and M39. The interaction with target base in tRNA stretch occupies residues 99 to 101 (NPD). The active-site Nucleophile is the C104. A disulfide bond links C104 and C200. G128 provides a ligand contact to ATP. An interaction with tRNA region spans residues 150–152 (KDQ). The active-site Cysteine persulfide intermediate is C200. Residues 308–309 (RY) are interaction with tRNA.

The protein belongs to the MnmA/TRMU family.

The protein resides in the cytoplasm. It carries out the reaction S-sulfanyl-L-cysteinyl-[protein] + uridine(34) in tRNA + AH2 + ATP = 2-thiouridine(34) in tRNA + L-cysteinyl-[protein] + A + AMP + diphosphate + H(+). Its function is as follows. Catalyzes the 2-thiolation of uridine at the wobble position (U34) of tRNA, leading to the formation of s(2)U34. This Listeria innocua serovar 6a (strain ATCC BAA-680 / CLIP 11262) protein is tRNA-specific 2-thiouridylase MnmA.